The primary structure comprises 466 residues: Adenosylhomocysteinase (466 aa).

Thr-57, Asp-132, and Glu-192 together coordinate substrate. An NAD(+)-binding site is contributed by 193-195; sequence TTT. The substrate site is built by Lys-222 and Asp-226. Residues Asn-227, 256–261, Glu-279, Asn-314, 335–337, and Asn-380 each bind NAD(+); these read GYGDVG and IGH.

This sequence belongs to the adenosylhomocysteinase family. NAD(+) is required as a cofactor.

Its subcellular location is the cytoplasm. It catalyses the reaction S-adenosyl-L-homocysteine + H2O = L-homocysteine + adenosine. It participates in amino-acid biosynthesis; L-homocysteine biosynthesis; L-homocysteine from S-adenosyl-L-homocysteine: step 1/1. Functionally, may play a key role in the regulation of the intracellular concentration of adenosylhomocysteine. This chain is Adenosylhomocysteinase, found in Sinorhizobium medicae (strain WSM419) (Ensifer medicae).